Reading from the N-terminus, the 308-residue chain is Glycosyltransferase 6 domain-containing protein 1 (308 aa).

At 1-6 (MNSKRM) the chain is on the cytoplasmic side. A helical; Signal-anchor for type II membrane protein transmembrane segment spans residues 7 to 23 (LLLVLFAFSLMLVERYF). The Lumenal segment spans residues 24 to 308 (RNHQVEELRL…KVAHDSHRKL (285 aa)). An N-linked (GlcNAc...) asparagine glycan is attached at Asn74. Residues 82–87 (FATGRF), 173–175 (AVN), and 195–198 (HAWW) contribute to the substrate site. Glu263 acts as the Nucleophile in catalysis.

This sequence belongs to the glycosyltransferase 6 family. Mn(2+) is required as a cofactor.

The protein localises to the membrane. In Macaca fascicularis (Crab-eating macaque), this protein is Glycosyltransferase 6 domain-containing protein 1 (GLT6D1).